The sequence spans 546 residues: Probable Dol-P-Man:Man(7)GlcNAc(2)-PP-Dol alpha-1,6-mannosyltransferase (546 aa).

9 helical membrane-spanning segments follow: residues 5 to 25 (ESIC…YYSY), 67 to 87 (FIPS…VNPL), 113 to 133 (FGTL…HLVY), 166 to 186 (ILVF…MCLI), 200 to 220 (LLLV…LIDS), 258 to 278 (LPWL…FVYI), 283 to 303 (LLIY…HKEW), 305 to 325 (FIIY…SLCF), and 340 to 360 (LMFF…LYVF).

The protein belongs to the glycosyltransferase 22 family.

Its subcellular location is the endoplasmic reticulum membrane. It carries out the reaction an alpha-D-Man-(1-&gt;2)-alpha-D-Man-(1-&gt;2)-alpha-D-Man-(1-&gt;3)-[alpha-D-Man-(1-&gt;2)-alpha-D-Man-(1-&gt;3)-alpha-D-Man-(1-&gt;6)]-beta-D-Man-(1-&gt;4)-beta-D-GlcNAc-(1-&gt;4)-alpha-D-GlcNAc-diphospho-di-trans,poly-cis-dolichol + a di-trans,poly-cis-dolichyl beta-D-mannosyl phosphate = an alpha-D-Man-(1-&gt;2)-alpha-D-Man-(1-&gt;2)-alpha-D-Man-(1-&gt;3)-[alpha-D-Man-(1-&gt;2)-alpha-D-Man-(1-&gt;3)-[alpha-D-Man-(1-&gt;6)]-alpha-D-Man-(1-&gt;6)]-beta-D-Man-(1-&gt;4)-beta-D-GlcNAc-(1-&gt;4)-alpha-D-GlcNAc-diphospho-di-trans,poly-cis-dolichol + a di-trans,poly-cis-dolichyl phosphate + H(+). The protein operates within protein modification; protein glycosylation. In terms of biological role, mannosyltransferase that operates in the biosynthetic pathway of dolichol-linked oligosaccharides, the glycan precursors employed in protein asparagine (N)-glycosylation. The assembly of dolichol-linked oligosaccharides begins on the cytosolic side of the endoplasmic reticulum membrane and finishes in its lumen. The sequential addition of sugars to dolichol pyrophosphate produces dolichol-linked oligosaccharides containing fourteen sugars, including two GlcNAcs, nine mannoses and three glucoses. Once assembled, the oligosaccharide is transferred from the lipid to nascent proteins by oligosaccharyltransferases. In the lumen of the endoplasmic reticulum, adds the eighth mannose residue in an alpha-1,6 linkage onto Man(7)GlcNAc(2)-PP-dolichol to produce Man(8)GlcNAc(2)-PP-dolichol. This is Probable Dol-P-Man:Man(7)GlcNAc(2)-PP-Dol alpha-1,6-mannosyltransferase (alg12) from Schizosaccharomyces pombe (strain 972 / ATCC 24843) (Fission yeast).